The primary structure comprises 52 residues: Conotoxin reg3h (52 aa).

A signal peptide is located at residue Ala-1. Positions 2-33 (LPLDGDQPADQPAERMQDISPELNPLFHPVKR) are excised as a propeptide. 3 disulfide bridges follow: Cys-35–Cys-49, Cys-36–Cys-47, and Cys-41–Cys-50. 4-hydroxyproline is present on residues Pro-38, Pro-48, and Pro-51. Asn-52 is modified (asparagine amide).

In terms of tissue distribution, expressed by the venom duct.

Its subcellular location is the secreted. This chain is Conotoxin reg3h, found in Conus regius (Crown cone).